Consider the following 87-residue polypeptide: Small ribosomal subunit protein bS20 (87 aa).

The protein belongs to the bacterial ribosomal protein bS20 family.

Binds directly to 16S ribosomal RNA. This is Small ribosomal subunit protein bS20 from Mycoplasma pneumoniae (strain ATCC 29342 / M129 / Subtype 1) (Mycoplasmoides pneumoniae).